Here is a 116-residue protein sequence, read N- to C-terminus: Large ribosomal subunit protein bL19 (116 aa).

Belongs to the bacterial ribosomal protein bL19 family.

This protein is located at the 30S-50S ribosomal subunit interface and may play a role in the structure and function of the aminoacyl-tRNA binding site. The sequence is that of Large ribosomal subunit protein bL19 from Nocardioides sp. (strain ATCC BAA-499 / JS614).